The chain runs to 372 residues: DNA replication and repair protein RecF (372 aa).

Position 30 to 37 (30 to 37 (GDNGQGKT)) interacts with ATP.

This sequence belongs to the RecF family.

The protein resides in the cytoplasm. In terms of biological role, the RecF protein is involved in DNA metabolism; it is required for DNA replication and normal SOS inducibility. RecF binds preferentially to single-stranded, linear DNA. It also seems to bind ATP. The protein is DNA replication and repair protein RecF of Ruminiclostridium cellulolyticum (strain ATCC 35319 / DSM 5812 / JCM 6584 / H10) (Clostridium cellulolyticum).